A 511-amino-acid polypeptide reads, in one-letter code: ATP synthase subunit alpha (511 aa).

169–176 (GDRQTGKT) contacts ATP.

The protein belongs to the ATPase alpha/beta chains family. As to quaternary structure, F-type ATPases have 2 components, CF(1) - the catalytic core - and CF(0) - the membrane proton channel. CF(1) has five subunits: alpha(3), beta(3), gamma(1), delta(1), epsilon(1). CF(0) has three main subunits: a(1), b(2) and c(9-12). The alpha and beta chains form an alternating ring which encloses part of the gamma chain. CF(1) is attached to CF(0) by a central stalk formed by the gamma and epsilon chains, while a peripheral stalk is formed by the delta and b chains.

Its subcellular location is the cell inner membrane. It catalyses the reaction ATP + H2O + 4 H(+)(in) = ADP + phosphate + 5 H(+)(out). Functionally, produces ATP from ADP in the presence of a proton gradient across the membrane. The alpha chain is a regulatory subunit. In Janthinobacterium sp. (strain Marseille) (Minibacterium massiliensis), this protein is ATP synthase subunit alpha.